We begin with the raw amino-acid sequence, 211 residues long: Vascular-related unknown protein 1 (211 aa).

Over residues 1–12 (MMDTFSCNSYEQ) the composition is skewed to polar residues. Positions 1–40 (MMDTFSCNSYEQNHPHDDDIDIDAHDHDSHGGDHQEESGW) are disordered. Residues 13 to 37 (NHPHDDDIDIDAHDHDSHGGDHQEE) are compositionally biased toward basic and acidic residues.

As to expression, expressed in vascular tissues of cotyledons, rosette leaves, sepals, petals, anther filaments. Expressed in roots, inflorescence stems and developing seeds.

The protein resides in the cytoplasm. It localises to the nucleus. In terms of biological role, involved in the regulation of xylem development and growth. May regulate secondary wall formation during vascular development by modulation of brassinosteroid, gibberellin and auxin hormone signaling pathways. In Arabidopsis thaliana (Mouse-ear cress), this protein is Vascular-related unknown protein 1.